The following is a 399-amino-acid chain: MAEAAAPLFDTFARAPLRFERGEGVWLFTESGERYLDFAAGVAVNSLGHAHPHLVEAIKTQAEKVWHVSNLYEVPGQEKLAKRLTEATFADKVFFTNSGAEALECAIKTARRYHYSKGHPEKFRIITFEGAFHGRTLATIAAGGQQKYLEGFGPKVEGFDQVPFGDVDALKAAITAETAALLIEPIQGEGGIRAPAKEFLQLLRSLCDEHDLLLIFDEVQTGVGRTGKFFAYEQTGVAPDIMAVAKGIGGGFPLGACLATADAASGMTAGVHGTTYGGNPLAMAVGNAVLDVVLADGFLEKVRDVALVFRQGLASLKDRYPDVIEEIRGEGLLLGIKARVPSGELLQAMRAEHLLGVPAGDNVIRLLPPLVTTAEEAREGLARVEAAAASLTAKQAKIA.

Residues 99 to 100 and phenylalanine 132 each bind pyridoxal 5'-phosphate; that span reads GA. A N(2)-acetyl-L-ornithine-binding site is contributed by arginine 135. Pyridoxal 5'-phosphate is bound at residue 217–220; the sequence is DEVQ. N6-(pyridoxal phosphate)lysine is present on lysine 246. Residue threonine 274 coordinates N(2)-acetyl-L-ornithine. Pyridoxal 5'-phosphate is bound at residue threonine 275.

Belongs to the class-III pyridoxal-phosphate-dependent aminotransferase family. ArgD subfamily. Homodimer. The cofactor is pyridoxal 5'-phosphate.

It localises to the cytoplasm. It catalyses the reaction N(2)-acetyl-L-ornithine + 2-oxoglutarate = N-acetyl-L-glutamate 5-semialdehyde + L-glutamate. It participates in amino-acid biosynthesis; L-arginine biosynthesis; N(2)-acetyl-L-ornithine from L-glutamate: step 4/4. The sequence is that of Acetylornithine aminotransferase from Agrobacterium fabrum (strain C58 / ATCC 33970) (Agrobacterium tumefaciens (strain C58)).